Here is a 235-residue protein sequence, read N- to C-terminus: Class B acid phosphatase (235 aa).

An N-terminal signal peptide occupies residues 1 to 22 (MKNLVKLSLIAMLTAATLPAMA). Asp-67 functions as the Nucleophile in the catalytic mechanism. Mg(2+) is bound by residues Asp-67 and Asp-69. Asp-69 acts as the Proton donor in catalysis. Residues 135 to 136 (TG) and Lys-175 contribute to the substrate site. Mg(2+) is bound at residue Asp-190.

It belongs to the class B bacterial acid phosphatase family. Homotetramer. Mg(2+) is required as a cofactor.

Its subcellular location is the periplasm. The catalysed reaction is a phosphate monoester + H2O = an alcohol + phosphate. In terms of biological role, dephosphorylates several organic phosphate monoesters. Also has a phosphotransferase activity catalyzing the transfer of low-energy phosphate groups from organic phosphate monoesters to free hydroxyl groups of various organic compounds. This Aggregatibacter actinomycetemcomitans serotype C (strain D11S-1) (Actinobacillus actinomycetemcomitans) protein is Class B acid phosphatase.